Consider the following 876-residue polypeptide: Alanine--tRNA ligase (876 aa).

Zn(2+)-binding residues include His568, His572, Cys670, and His674.

It belongs to the class-II aminoacyl-tRNA synthetase family. It depends on Zn(2+) as a cofactor.

The protein resides in the cytoplasm. It catalyses the reaction tRNA(Ala) + L-alanine + ATP = L-alanyl-tRNA(Ala) + AMP + diphosphate. In terms of biological role, catalyzes the attachment of alanine to tRNA(Ala) in a two-step reaction: alanine is first activated by ATP to form Ala-AMP and then transferred to the acceptor end of tRNA(Ala). Also edits incorrectly charged Ser-tRNA(Ala) and Gly-tRNA(Ala) via its editing domain. The sequence is that of Alanine--tRNA ligase from Geobacter metallireducens (strain ATCC 53774 / DSM 7210 / GS-15).